Consider the following 358-residue polypeptide: 3-O-methylredipecamine 2-O-methyltransferase IpeOMT3 (358 aa).

S-adenosyl-L-methionine contacts are provided by Gly193, Asp216, Asp236, Met237, and Lys250. The active-site Proton acceptor is His254.

The protein belongs to the class I-like SAM-binding methyltransferase superfamily. Cation-independent O-methyltransferase family. In terms of tissue distribution, expressed in roots.

The protein resides in the cytoplasm. It is found in the cytosol. The enzyme catalyses (S)-reticuline + S-adenosyl-L-methionine = (S)-laudanine + S-adenosyl-L-homocysteine + H(+). It participates in alkaloid biosynthesis. In terms of biological role, O-methyltransferase involved in the biosynthesis of ipecac and benzylisoquinoline monoterpenoid-isoquinoline alkaloids natural products, starting by the condensation of dopamine and secologanin, and including emetine and cephaeline, drugs used both as anti-protozoal (e.g. treatment of ameobiasis) and as emetic agents. Catalyzes 2-O-methylation of 3-O-methylredipecamine and, with less efficiency, the 7-O-methylation of (S)-coclaurine, (R,S)-N-methylcoclaurine, (R,S)-4'-O-methylcoclaurine, (R,S)-6-O-methyllaudanosoline, nororientaline, (S)-norreticuline and (S)-reticuline. In Carapichea ipecacuanha (Ipecac), this protein is 3-O-methylredipecamine 2-O-methyltransferase IpeOMT3.